A 35-amino-acid polypeptide reads, in one-letter code: Trypsin inhibitor 1 (35 aa).

Cystine bridges form between cysteine 2–cysteine 19, cysteine 9–cysteine 23, and cysteine 18–cysteine 34.

In terms of biological role, trypsin inhibitor. The polypeptide is Trypsin inhibitor 1 (Spinacia oleracea (Spinach)).